A 98-amino-acid polypeptide reads, in one-letter code: ATP synthase subunit alpha, chloroplastic (98 aa).

This sequence belongs to the ATPase alpha/beta chains family. F-type ATPases have 2 components, CF(1) - the catalytic core - and CF(0) - the membrane proton channel. CF(1) has five subunits: alpha(3), beta(3), gamma(1), delta(1), epsilon(1). CF(0) has four main subunits: a, b, b' and c.

It localises to the plastid. The protein resides in the chloroplast thylakoid membrane. It catalyses the reaction ATP + H2O + 4 H(+)(in) = ADP + phosphate + 5 H(+)(out). In terms of biological role, produces ATP from ADP in the presence of a proton gradient across the membrane. The alpha chain is a regulatory subunit. The sequence is that of ATP synthase subunit alpha, chloroplastic (atpA) from Populus euphratica (Euphrates poplar).